The primary structure comprises 304 residues: N-acetylmuramic acid 6-phosphate etherase (304 aa).

One can recognise an SIS domain in the interval 57-220 (AVKGLSAGGR…STATMVGLGK (164 aa)). Glu85 (proton donor) is an active-site residue. Glu116 is a catalytic residue.

The protein belongs to the GCKR-like family. MurNAc-6-P etherase subfamily. As to quaternary structure, homodimer.

It catalyses the reaction N-acetyl-D-muramate 6-phosphate + H2O = N-acetyl-D-glucosamine 6-phosphate + (R)-lactate. It participates in amino-sugar metabolism; N-acetylmuramate degradation. Its function is as follows. Specifically catalyzes the cleavage of the D-lactyl ether substituent of MurNAc 6-phosphate, producing GlcNAc 6-phosphate and D-lactate. This is N-acetylmuramic acid 6-phosphate etherase from Cutibacterium acnes (strain DSM 16379 / KPA171202) (Propionibacterium acnes).